The primary structure comprises 149 residues: Ribosome-binding factor A (149 aa).

It belongs to the RbfA family. As to quaternary structure, monomer. Binds 30S ribosomal subunits, but not 50S ribosomal subunits or 70S ribosomes.

It is found in the cytoplasm. One of several proteins that assist in the late maturation steps of the functional core of the 30S ribosomal subunit. Associates with free 30S ribosomal subunits (but not with 30S subunits that are part of 70S ribosomes or polysomes). Required for efficient processing of 16S rRNA. May interact with the 5'-terminal helix region of 16S rRNA. This chain is Ribosome-binding factor A, found in Caulobacter vibrioides (strain ATCC 19089 / CIP 103742 / CB 15) (Caulobacter crescentus).